Consider the following 477-residue polypeptide: Regulatory protein HrpB (477 aa).

Residues 375–477 form the HTH araC/xylS-type domain; sequence RRAYRYIIEN…NEAPSETIWR (103 aa). 2 consecutive DNA-binding regions (H-T-H motif) follow at residues 393-414 and 444-467; these read REVAAHINVTERALQLAFKSAV and IIDTASRWGIRSRSALVKGYRKQF.

Functionally, positive regulation of hypersensitive response genes involved in plant pathogenicity and partly of its own synthesis in minimal medium. The polypeptide is Regulatory protein HrpB (hrpB) (Ralstonia nicotianae (strain ATCC BAA-1114 / GMI1000) (Ralstonia solanacearum)).